The chain runs to 458 residues: MKEYKTISEIAGPLLFVRKTEPVGYQELVNIVLSDGTVKRGQVLDSSNDVVAVQVFEGTSGISRDSSVKFLGETIKMPVSKDMLGRILSGSGEPLDGGPAIIPEKRLEIVGAAINPYSRRQPKDFIQTGISTIDGMNTLVRGQKLPIFSGSGLPHNEIALQIARQAKVVGSTEPFAVVFCAMGITAEEAQTFMKDFERTGALERAVVFLNLADDPAIERIITPRLALTTAEYLAFEHDMHVLVIYTDMTNYCEALRQIGAAREEVPGRRGYPGYMYTDLAQLYERAGIIEGKKGSITQVPILTMPGDDITHPIPDLTGYITEGQIVVARDLHRKNIYPPINVSPSLSRLMSLGIGAGKTREDHKAVSDQCYSAYAEGKDLRGLVAIVGKDALSERDRQFLEFADAFEDKFVRQGREEDRSIEQTLDLAWELLSMLPINALNKIDNKYIEKYHPSKRKK.

The protein belongs to the ATPase alpha/beta chains family. Has multiple subunits with at least A(3), B(3), C, D, E, F, H, I and proteolipid K(x).

It is found in the cell membrane. Functionally, component of the A-type ATP synthase that produces ATP from ADP in the presence of a proton gradient across the membrane. The B chain is a regulatory subunit. The protein is A-type ATP synthase subunit B of Methanocella arvoryzae (strain DSM 22066 / NBRC 105507 / MRE50).